A 217-amino-acid polypeptide reads, in one-letter code: Urease accessory protein UreG (217 aa).

13-20 lines the GTP pocket; the sequence is GPVGSGKT.

This sequence belongs to the SIMIBI class G3E GTPase family. UreG subfamily. As to quaternary structure, homodimer. UreD, UreF and UreG form a complex that acts as a GTP-hydrolysis-dependent molecular chaperone, activating the urease apoprotein by helping to assemble the nickel containing metallocenter of UreC. The UreE protein probably delivers the nickel.

The protein resides in the cytoplasm. Functionally, facilitates the functional incorporation of the urease nickel metallocenter. This process requires GTP hydrolysis, probably effectuated by UreG. The chain is Urease accessory protein UreG from Frankia alni (strain DSM 45986 / CECT 9034 / ACN14a).